Consider the following 358-residue polypeptide: Phenylalanine--tRNA ligase alpha subunit (358 aa).

Mg(2+) is bound at residue E262.

Belongs to the class-II aminoacyl-tRNA synthetase family. Phe-tRNA synthetase alpha subunit type 1 subfamily. In terms of assembly, tetramer of two alpha and two beta subunits. The cofactor is Mg(2+).

It is found in the cytoplasm. It carries out the reaction tRNA(Phe) + L-phenylalanine + ATP = L-phenylalanyl-tRNA(Phe) + AMP + diphosphate + H(+). In Streptomyces coelicolor (strain ATCC BAA-471 / A3(2) / M145), this protein is Phenylalanine--tRNA ligase alpha subunit (pheS).